Reading from the N-terminus, the 445-residue chain is Ribosomal protein uS12 methylthiotransferase RimO (445 aa).

In terms of domain architecture, MTTase N-terminal spans lysine 6–lysine 121. Cysteine 15, cysteine 50, cysteine 84, cysteine 159, cysteine 163, and cysteine 166 together coordinate [4Fe-4S] cluster. Positions leucine 145–glutamate 375 constitute a Radical SAM core domain. One can recognise a TRAM domain in the interval glutamine 378–glutamine 445.

This sequence belongs to the methylthiotransferase family. RimO subfamily. It depends on [4Fe-4S] cluster as a cofactor.

It is found in the cytoplasm. The enzyme catalyses L-aspartate(89)-[ribosomal protein uS12]-hydrogen + (sulfur carrier)-SH + AH2 + 2 S-adenosyl-L-methionine = 3-methylsulfanyl-L-aspartate(89)-[ribosomal protein uS12]-hydrogen + (sulfur carrier)-H + 5'-deoxyadenosine + L-methionine + A + S-adenosyl-L-homocysteine + 2 H(+). Its function is as follows. Catalyzes the methylthiolation of an aspartic acid residue of ribosomal protein uS12. This Desulfitobacterium hafniense (strain Y51) protein is Ribosomal protein uS12 methylthiotransferase RimO.